The following is a 120-amino-acid chain: MASRKEALARRANRVRRHIKSVANGRPRLSVHRSSKNIYAQIIDDVAGKTLASASTLDKDLRGSLKTGADTAAAAAVGKLVAERASKAGVTDVVFDRGAFIYHGRIKALAEAAREGGLTF.

It belongs to the universal ribosomal protein uL18 family. In terms of assembly, part of the 50S ribosomal subunit; part of the 5S rRNA/L5/L18/L25 subcomplex. Contacts the 5S and 23S rRNAs.

In terms of biological role, this is one of the proteins that bind and probably mediate the attachment of the 5S RNA into the large ribosomal subunit, where it forms part of the central protuberance. This is Large ribosomal subunit protein uL18 from Rhizobium etli (strain ATCC 51251 / DSM 11541 / JCM 21823 / NBRC 15573 / CFN 42).